A 78-amino-acid polypeptide reads, in one-letter code: uncharacterized protein (78 aa).

Positions 51–78 (GGKWDGGGSGGKWNGGGGSGGGSWKKWN) are disordered.

This is an uncharacterized protein from Dictyostelium discoideum (Social amoeba).